The sequence spans 91 residues: Putative septation protein SpoVG (91 aa).

This sequence belongs to the SpoVG family.

In terms of biological role, could be involved in septation. This Clostridium botulinum (strain Alaska E43 / Type E3) protein is Putative septation protein SpoVG.